Reading from the N-terminus, the 203-residue chain is Sarcosine oxidase subunit gamma (203 aa).

The protein belongs to the SoxG family. Heterotetramer composed of subunits alpha (SoxA), beta (SoxB), gamma (SoxG) and delta (SoxD).

The protein resides in the cytoplasm. The catalysed reaction is sarcosine + (6S)-5,6,7,8-tetrahydrofolate + O2 = (6R)-5,10-methylene-5,6,7,8-tetrahydrofolate + glycine + H2O2. It catalyses the reaction sarcosine + O2 + H2O = formaldehyde + glycine + H2O2. In the presence of tetrahydrofolate, catalyzes the oxidative demethylation of sarcosine to yield glycine, 5,10-methylenetetrahydrofolate and hydrogen peroxide. In the absence of tetrahydrofolate, catalyzes the oxidative demethylation of sarcosine to yield glycine, formaldehyde and hydrogen peroxide. The protein is Sarcosine oxidase subunit gamma (soxG) of Arthrobacter sp.